The primary structure comprises 207 residues: Interleukin-6 (207 aa).

Positions 1–20 (MNSLSTSAFSLGLLLVMATA) are cleaved as a signal peptide. A disulfide bridge connects residues cysteine 67 and cysteine 73. Serine 76 carries the phosphoserine modification. An intrachain disulfide couples cysteine 96 to cysteine 106.

This sequence belongs to the IL-6 superfamily. As to quaternary structure, component of a hexamer of two molecules each of IL6, IL6R and IL6ST; first binds to IL6R to associate with the signaling subunit IL6ST. Interacts with IL6R (via the N-terminal ectodomain); this interaction may be affected by IL6R-binding with SORL1, hence decreasing IL6 cis signaling. Interacts with SORL1 (via the N-terminal ectodomain); this interaction leads to IL6 internalization and lysosomal degradation. May form a trimeric complex with the soluble SORL1 ectodomain and soluble IL6R receptor; this interaction might stabilize circulating IL6, hence promoting IL6 trans signaling.

The protein localises to the secreted. Functionally, cytokine with a wide variety of biological functions in immunity, tissue regeneration, and metabolism. Binds to IL6R, then the complex associates to the signaling subunit IL6ST/gp130 to trigger the intracellular IL6-signaling pathway. The interaction with the membrane-bound IL6R and IL6ST stimulates 'classic signaling', whereas the binding of IL6 and soluble IL6R to IL6ST stimulates 'trans-signaling'. Alternatively, 'cluster signaling' occurs when membrane-bound IL6:IL6R complexes on transmitter cells activate IL6ST receptors on neighboring receiver cells. IL6 is a potent inducer of the acute phase response. Rapid production of IL6 contributes to host defense during infection and tissue injury, but excessive IL6 synthesis is involved in disease pathology. In the innate immune response, is synthesized by myeloid cells, such as macrophages and dendritic cells, upon recognition of pathogens through toll-like receptors (TLRs) at the site of infection or tissue injury. In the adaptive immune response, is required for the differentiation of B cells into immunoglobulin-secreting cells. Plays a major role in the differentiation of CD4(+) T cell subsets. Essential factor for the development of T follicular helper (Tfh) cells that are required for the induction of germinal-center formation. Required to drive naive CD4(+) T cells to the Th17 lineage. Also required for proliferation of myeloma cells and the survival of plasmablast cells. Its function is as follows. Acts as an essential factor in bone homeostasis and on vessels directly or indirectly by induction of VEGF, resulting in increased angiogenesis activity and vascular permeability. Induces, through 'trans-signaling' and synergistically with IL1B and TNF, the production of VEGF. Involved in metabolic controls, is discharged into the bloodstream after muscle contraction increasing lipolysis and improving insulin resistance. 'Trans-signaling' in central nervous system also regulates energy and glucose homeostasis. Mediates, through GLP-1, crosstalk between insulin-sensitive tissues, intestinal L cells and pancreatic islets to adapt to changes in insulin demand. Also acts as a myokine. Plays a protective role during liver injury, being required for maintenance of tissue regeneration. Also has a pivotal role in iron metabolism by regulating HAMP/hepcidin expression upon inflammation or bacterial infection. Through activation of IL6ST-YAP-NOTCH pathway, induces inflammation-induced epithelial regeneration. The sequence is that of Interleukin-6 (IL6) from Canis lupus familiaris (Dog).